A 233-amino-acid chain; its full sequence is Large ribosomal subunit protein uL3 (233 aa).

The disordered stretch occupies residues G146–G171. Q168 is modified (N5-methylglutamine).

It belongs to the universal ribosomal protein uL3 family. As to quaternary structure, part of the 50S ribosomal subunit. Forms a cluster with proteins L14 and L19. Methylated by PrmB.

In terms of biological role, one of the primary rRNA binding proteins, it binds directly near the 3'-end of the 23S rRNA, where it nucleates assembly of the 50S subunit. This is Large ribosomal subunit protein uL3 from Bordetella bronchiseptica (strain ATCC BAA-588 / NCTC 13252 / RB50) (Alcaligenes bronchisepticus).